A 2349-amino-acid polypeptide reads, in one-letter code: Reducing polyketide synthase AFT16-1 (2349 aa).

Over residues 1-14 the composition is skewed to basic and acidic residues; sequence MNGKSRDNGHDGKR. 2 disordered regions span residues 1–21 and 37–80; these read MNGK…VPAE and TNPS…TSNS. Residues 20 to 462 enclose the Ketosynthase family 3 (KS3) domain; sequence AEPIAIVGTA…GTNAHTILES (443 aa). Catalysis depends on for beta-ketoacyl synthase activity residues Cys194, His333, and His382. The tract at residues 578 to 888 is malonyl-CoA:ACP transacylase (MAT) domain; the sequence is VFTGQGAQWP…LLYKGVLERF (311 aa). The N-terminal hotdog fold stretch occupies residues 958–1092; the sequence is HPLLGFRSVD…GDILLSHFAK (135 aa). Positions 958-1263 are dehydratase (DH) domain; sequence HPLLGFRSVD…QVEGLKFSCM (306 aa). The region spanning 958–1269 is the PKS/mFAS DH domain; the sequence is HPLLGFRSVD…FSCMYPAQET (312 aa). Catalysis depends on His990, which acts as the Proton acceptor; for dehydratase activity. A C-terminal hotdog fold region spans residues 1111–1269; sequence MSSVEPSLFY…FSCMYPAQET (159 aa). Asp1170 acts as the Proton donor; for dehydratase activity in catalysis. Residues 1976 to 2164 are ketoreductase (KR) domain; it reads SPNKTYLLVG…VVGVGYVARA (189 aa). Residues 2273 to 2347 enclose the Carrier domain; it reads EILSGSLKQK…GLCLEAIGQW (75 aa). The residue at position 2307 (Ser2307) is an O-(pantetheine 4'-phosphoryl)serine.

Its pathway is mycotoxin biosynthesis. In terms of biological role, reducing polyketide synthase; part of the gene clusters that mediate the biosynthesis of the host-selective toxins (HSTs) AF-toxins responsible for Alternaria black spot of strawberry disease by the strawberry pathotype. AF-toxin I and III are valine derivatives of 2,3-dyhydroxy-isovaleric acid and 2-hydroxy-isovaleric acid respectively, while AF II is an isoleucine derivative of 2-hydroxy-valeric acid. These derivatives are bound to a 9,10-epoxy-8-hydroxy-9-methyl-decatrienoic acid (EDA) moiety. On cellular level, AF-toxins affect plasma membrane of susceptible cells and cause a sudden increase in loss of K(+) after a few minutes of toxin treatment. The aldo-keto reductase AFTS1 catalyzes the conversion of 2-keto-isovaleric acid (2-KIV) to 2-hydroxy-isovaleric acid (2-HIV) by reduction of its ketone to an alcohol. The acyl-CoA ligase AFT1, the hydrolase AFT2 and the enoyl-CoA hydratases AFT3 and AFT6, but also the polyketide synthase AFT9, the acyl-CoA dehydrogenase AFT10, the cytochrome P450 monooxygenase AFT11 and the oxidoreductase AFT12 are all involved in the biosynthesis of the AK-, AF- and ACT-toxin common EDA structural moiety. The exact function of each enzyme, and of additional enzymes identified within the AF-toxin clusters have still to be determined. This is Reducing polyketide synthase AFT16-1 from Alternaria alternata (Alternaria rot fungus).